Reading from the N-terminus, the 455-residue chain is MRNCCRECGLSAGHLEPEASSNCASDVKSSPDMDSVSSQDSLYLPNTVGASLEDQDLWSQFHQEGTEMIITKSGRRMFPQCKIRLFGLHPYAKYMLLVDFVPLDNFRYKWNKNQWEAAGKAEPHPPCRTYVHPDSPAPGAHWMKDPICFQKLKLTNNTLDQQGHIILHSMHRYKPRFHVVQSDDMYNSPWGLVQVFSFPETEFTSVTAYQNEKITKLKINHNPFAKGFREQERSHKRDDVLKILQQSPSKRQKRKKWEDSPEADISDFPKAICVKEESIMDPAGVYQNWVSDHEANQGLTPHSPESEGANQEQQVPTSSSNFYNKSHYRRSSQHLSSPFELGEPSSRRLTPDIATVPDSDPDSLAVFHVIPTQNSAPERTCSMNFSMEAPMKQPLRGAMYSPYGADQWLVPAQGQYRPVGYTAYPTDLSTQGAVAHPHSAMSDWSQYSLFPYSCW.

Disordered stretches follow at residues 21–40 (SNCA…SSQD), 229–262 (REQE…DSPE), and 295–346 (ANQG…EPSS). A DNA-binding region (T-box) is located at residues 57–230 (LWSQFHQEGT…HNPFAKGFRE (174 aa)). The span at 229-241 (REQERSHKRDDVL) shows a compositional bias: basic and acidic residues. Over residues 308 to 324 (GANQEQQVPTSSSNFYN) the composition is skewed to polar residues.

Forms a repression complex on the promoters of the nodal/nr1 and siamois genes with the maternal factors tcf7l1/tcf3 and pouf5.1/oct-25. Interacts (via C-terminus) with tcf7l1/tcf3 (via N-terminus). Also interacts with the other POU-domain transcription factors pou5f1.2/oct-91 and pou5f1.3/oct-60. As to expression, uniformly distributed in stage I oocytes but becomes localized to the vegetal hemisphere by stage II and remains so thereafter throughout oogenesis and the early embryonic cleavage stages. Zygotic expression parallels blastopore formation and shifts from dorsal expression in the marginal zone of late blastula and early gastrula stages to a ventral/lateral expression at the posterior end of later stage embryos. Expression is excluded from the notochord. In tailbud and tadpole stages, expressed exclusively in a subset of posterior Rohon-Beard neurons.

The protein resides in the nucleus. Functionally, transcription factor required for both mesoderm and endoderm formation in the embryo; signaling determinants and concentration levels may determine which germ layer is formed. Acts together with beta-catenin to activate genes that are responsible for mesoderm induction including wnt-8, eomes t/bra, siamois, mix1 and sox17. Directly binds to promoter DNA. Patterns the mesoderm along the dorsoventral and posterior axis. Activates siamois gene transcription when alone or in combination with beta-catenin, but inhibits siamois transcription in combination with pou5f1.1/oct-25. The polypeptide is T-box protein VegT-A (vegt-a) (Xenopus laevis (African clawed frog)).